Here is a 539-residue protein sequence, read N- to C-terminus: Protein mushroom body miniature (539 aa).

Residues methionine 1–asparagine 11 are compositionally biased toward polar residues. The tract at residues methionine 1–lysine 345 is disordered. A compositionally biased stretch (basic and acidic residues) spans lysine 67–glutamine 79. The span at proline 80–arginine 89 shows a compositional bias: basic residues. Residues glycine 90 to arginine 101 show a composition bias toward gly residues. Over residues isoleucine 199 to lysine 208 the composition is skewed to basic and acidic residues. Low complexity predominate over residues valine 268 to aspartate 289. Phosphoserine is present on residues serine 288 and serine 290. Phosphothreonine is present on residues threonine 292 and threonine 327. Positions threonine 327–glutamate 336 are enriched in acidic residues. Serine 332 bears the Phosphoserine mark. The residue at position 333 (threonine 333) is a Phosphothreonine. 2 consecutive CCHC-type zinc fingers follow at residues cysteine 354 to cysteine 367 and cysteine 371 to asparagine 386. A disordered region spans residues valine 421 to proline 513. A compositionally biased stretch (basic residues) spans lysine 428–arginine 447. Residues aspartate 456–serine 480 are compositionally biased toward acidic residues.

May be phosphorylated in vivo by CkIIalpha. mbm and CkIIalpha colocalize to the nucleolus and mbm is phosphorylated in vitro by CkIIalpha. Shows widespread expression in third instar larval brain with no apparent difference between males and females (at protein level). Detected at low levels in the mushroom body neuropil and is also expressed in many cells of the brain outside the mushroom body (at protein level). Not detected in third instar larval brain cells in anaphase (at protein level).

It is found in the nucleus. The protein resides in the nucleolus. Its subcellular location is the cytoplasm. Required for small ribosomal subunit biogenesis in neuroblasts. Plays a role in mushroom body development. This Drosophila melanogaster (Fruit fly) protein is Protein mushroom body miniature.